A 307-amino-acid polypeptide reads, in one-letter code: Putative ankyrin repeat protein R229 (307 aa).

6 ANK repeats span residues Ala-135–Val-164, Asp-165–Ala-194, Asp-196–Ala-224, Asn-226–Ala-254, Arg-256–Tyr-284, and Ser-286–Asp-307.

The polypeptide is Putative ankyrin repeat protein R229 (Acanthamoeba polyphaga (Amoeba)).